The primary structure comprises 880 residues: Replication origin-binding protein (880 aa).

Positions 60 to 225 (PLPIRTKPVL…AELRGAENVH (166 aa)) constitute a Helicase ATP-binding domain. Residue 73-80 (APMGSGKT) participates in ATP binding. The tract at residues 260 to 287 (PPAGDESREASASQPPPHDSSNEPCAPE) is disordered.

Belongs to the herpesviridae OriBP family. Homodimer. Interacts with the major DNA-binding protein. Interacts with the DNA helicase/primase complex-associated protein and the polymerase accessory protein.

It localises to the host nucleus. Its function is as follows. Functions as a docking protein to recruit essential components of the viral replication machinery to viral DNA origins. In the presence of the major DNA-binding protein, opens dsDNA leading to a conformational change in the origin that facilitates DNA unwinding and subsequent replication. In Psittacid herpesvirus 1 (isolate Amazon parrot/-/97-0001/1997) (PsHV-1), this protein is Replication origin-binding protein (UL9).